Here is a 299-residue protein sequence, read N- to C-terminus: Mycothiol acetyltransferase (299 aa).

N-acetyltransferase domains are found at residues 1–156 (MGWT…TYRG) and 149–299 (VTMR…ARAL). A 1D-myo-inositol 2-(L-cysteinylamino)-2-deoxy-alpha-D-glucopyranoside-binding site is contributed by Glu33. Residues 75–77 (LVV) and 83–88 (RRGIGT) contribute to the acetyl-CoA site. 1D-myo-inositol 2-(L-cysteinylamino)-2-deoxy-alpha-D-glucopyranoside contacts are provided by Glu176, Lys218, and Glu231. Residues 235 to 237 (VGI) and 242 to 248 (QGRGLGR) each bind acetyl-CoA. Position 269 (Tyr269) interacts with 1D-myo-inositol 2-(L-cysteinylamino)-2-deoxy-alpha-D-glucopyranoside. Position 274–279 (274–279 (NTAALH)) interacts with acetyl-CoA.

Belongs to the acetyltransferase family. MshD subfamily. As to quaternary structure, monomer.

The enzyme catalyses 1D-myo-inositol 2-(L-cysteinylamino)-2-deoxy-alpha-D-glucopyranoside + acetyl-CoA = mycothiol + CoA + H(+). In terms of biological role, catalyzes the transfer of acetyl from acetyl-CoA to desacetylmycothiol (Cys-GlcN-Ins) to form mycothiol. The chain is Mycothiol acetyltransferase from Rhodococcus erythropolis (strain PR4 / NBRC 100887).